We begin with the raw amino-acid sequence, 524 residues long: Bifunctional purine biosynthesis protein PurH (524 aa).

Positions Met1–Thr149 constitute an MGS-like domain.

It belongs to the PurH family.

It catalyses the reaction (6R)-10-formyltetrahydrofolate + 5-amino-1-(5-phospho-beta-D-ribosyl)imidazole-4-carboxamide = 5-formamido-1-(5-phospho-D-ribosyl)imidazole-4-carboxamide + (6S)-5,6,7,8-tetrahydrofolate. It carries out the reaction IMP + H2O = 5-formamido-1-(5-phospho-D-ribosyl)imidazole-4-carboxamide. The protein operates within purine metabolism; IMP biosynthesis via de novo pathway; 5-formamido-1-(5-phospho-D-ribosyl)imidazole-4-carboxamide from 5-amino-1-(5-phospho-D-ribosyl)imidazole-4-carboxamide (10-formyl THF route): step 1/1. It functions in the pathway purine metabolism; IMP biosynthesis via de novo pathway; IMP from 5-formamido-1-(5-phospho-D-ribosyl)imidazole-4-carboxamide: step 1/1. The chain is Bifunctional purine biosynthesis protein PurH from Chlorobium luteolum (strain DSM 273 / BCRC 81028 / 2530) (Pelodictyon luteolum).